Here is a 444-residue protein sequence, read N- to C-terminus: Argininosuccinate synthase (444 aa).

ATP is bound by residues 18–26 (AFSGGLDTS) and Ala44. Residue Tyr100 coordinates L-citrulline. Residues Gly130 and Thr132 each contribute to the ATP site. 3 residues coordinate L-aspartate: Thr132, Asn136, and Asp137. Residue Asn136 participates in L-citrulline binding. Asp137 contributes to the ATP binding site. Residues Arg140 and Ser193 each contribute to the L-citrulline site. ATP is bound at residue Asp195. L-citrulline contacts are provided by Thr202, Glu204, and Glu281.

This sequence belongs to the argininosuccinate synthase family. Type 2 subfamily. In terms of assembly, homotetramer.

It localises to the cytoplasm. The enzyme catalyses L-citrulline + L-aspartate + ATP = 2-(N(omega)-L-arginino)succinate + AMP + diphosphate + H(+). It participates in amino-acid biosynthesis; L-arginine biosynthesis; L-arginine from L-ornithine and carbamoyl phosphate: step 2/3. This chain is Argininosuccinate synthase, found in Actinobacillus succinogenes (strain ATCC 55618 / DSM 22257 / CCUG 43843 / 130Z).